We begin with the raw amino-acid sequence, 126 residues long: Defensin-like protein 183 (126 aa).

Positions 1–26 (MEKALSLVVFIIFSIMLASVENKVNA) are cleaved as a signal peptide. Intrachain disulfides connect Cys-29/Cys-68, Cys-36/Cys-55, Cys-39/Cys-62, Cys-43/Cys-64, Cys-80/Cys-126, Cys-91/Cys-111, Cys-96/Cys-120, and Cys-100/Cys-122.

This sequence belongs to the DEFL family.

The protein resides in the secreted. This Arabidopsis thaliana (Mouse-ear cress) protein is Defensin-like protein 183 (LCR19).